Reading from the N-terminus, the 209-residue chain is Probable GTP-binding protein EngB (209 aa).

Residues asparagine 23–proline 198 form the EngB-type G domain. GTP contacts are provided by residues glycine 31–serine 38, glycine 58–leucine 62, aspartate 76–glycine 79, threonine 143–aspartate 146, and phenylalanine 177–serine 179. Residues serine 38 and threonine 60 each contribute to the Mg(2+) site.

Belongs to the TRAFAC class TrmE-Era-EngA-EngB-Septin-like GTPase superfamily. EngB GTPase family. Mg(2+) serves as cofactor.

Functionally, necessary for normal cell division and for the maintenance of normal septation. In Azoarcus sp. (strain BH72), this protein is Probable GTP-binding protein EngB.